Reading from the N-terminus, the 190-residue chain is Nascent polypeptide-associated complex subunit alpha (190 aa).

2 disordered regions span residues 20–42 (FDSD…AERK) and 123–155 (SLQN…VDAK). The segment covering 30–40 (HASDKVASRAE) has biased composition (basic and acidic residues). One can recognise an NAC-A/B domain in the interval 37 to 102 (SRAERKSRKA…AKAEDMSQLA (66 aa)). The segment covering 138 to 151 (EEEEDDDSPIDEEG) has biased composition (acidic residues). Residues 152-189 (VDAKDIDLVMQQVSCSRRKAVKALKESNGDLINAIMNA) enclose the UBA domain.

The protein belongs to the NAC-alpha family. As to quaternary structure, part of the nascent polypeptide-associated complex (NAC), consisting of EGD2 and EGD1. NAC associates with ribosomes via EGD1.

It is found in the cytoplasm. It localises to the nucleus. In terms of biological role, component of the nascent polypeptide-associated complex (NAC), a dynamic component of the ribosomal exit tunnel, protecting the emerging polypeptides from interaction with other cytoplasmic proteins to ensure appropriate nascent protein targeting. The NAC complex also promotes mitochondrial protein import by enhancing productive ribosome interactions with the outer mitochondrial membrane and blocks the inappropriate interaction of ribosomes translating non-secretory nascent polypeptides with translocation sites in the membrane of the endoplasmic reticulum. EGD2 may also be involved in transcription regulation. This Mycosarcoma maydis (Corn smut fungus) protein is Nascent polypeptide-associated complex subunit alpha (EGD2).